The following is an 867-amino-acid chain: Cation/H(+) antiporter 23, chloroplastic (867 aa).

12 helical membrane-spanning segments follow: residues 43-63, 75-95, 112-132, 146-166, 175-195, 212-232, 242-262, 283-303, 336-356, 362-382, 393-413, and 427-447; these read SGST…VANL, LYLP…PSVL, MVLE…LGLG, VIIA…LYYL, IISG…PDLA, AMCA…FGFA, KMMP…IFVI, HVWF…ACGV, GILM…GFML, FMMV…TVIT, AFAI…VLNA, and HMTI…AFAY. The disordered stretch occupies residues 848 to 867; that stretch reads SMYEDEDEDDEEDHQYGIHR. Positions 851 to 860 are enriched in acidic residues; that stretch reads EDEDEDDEED.

The protein belongs to the monovalent cation:proton antiporter 2 (CPA2) transporter (TC 2.A.37) family. CHX (TC 2.A.37.4) subfamily. As to expression, specifically expressed in flower buds and pollen. Expressed in leaves, roots and stems.

Its subcellular location is the plastid. The protein localises to the chloroplast membrane. The protein resides in the endoplasmic reticulum membrane. Operates as a K(+)/H(+) antiporter or Na(+)/H(+) antiporter of the chloroplast envelope that functions in pH homeostasis and chloroplast development. Monovalent cation transporter with a preference for Cs(+), K(+) and Rb(+) relative to Na(+) or Li(+). Required for pollen tube guidance, but not for normal pollen development. May also be involved in the development or function of the female gametophyte. In Arabidopsis thaliana (Mouse-ear cress), this protein is Cation/H(+) antiporter 23, chloroplastic (CHX23).